Reading from the N-terminus, the 462-residue chain is Notoamide biosynthesis cluster protein O' (462 aa).

The next 3 helical transmembrane spans lie at 16–36, 55–75, and 79–99; these read IFNV…WAAM, AVIF…IAKI, and WAFA…YCNV. N-linked (GlcNAc...) asparagine glycosylation is present at Asn102. Helical transmembrane passes span 104-124, 143-163, 173-193, and 233-253; these read SWYI…FWLT, AYWL…TLGV, ISVQ…FVAA, and ILLL…FSTY. Asn254 is a glycosylation site (N-linked (GlcNAc...) asparagine). 4 helical membrane-spanning segments follow: residues 265–285, 297–317, 343–363, and 404–424; these read LSSL…GFFL, MAAF…AMVV, VYIL…WLIG, and AVAV…FVIY. Residues 443–462 are disordered; it reads LQTSGEGSHDIMDANGKSDD. The span at 449 to 462 shows a compositional bias: basic and acidic residues; it reads GSHDIMDANGKSDD.

The protein belongs to the unc-93 family.

The protein resides in the membrane. Functionally, part of the gene cluster that mediates the biosynthesis of notoamide, a fungal indole alkaloid that belongs to a family of natural products containing a characteristic bicyclo[2.2.2]diazaoctane core. The first step of notoamide biosynthesis involves coupling of L-proline and L-tryptophan by the bimodular NRPS notE', to produce cyclo-L-tryptophan-L-proline called brevianamide F. The reverse prenyltransferase notF' then acts as a deoxybrevianamide E synthase and converts brevianamide F to deoxybrevianamide E via reverse prenylation at C-2 of the indole ring leading to the bicyclo[2.2.2]diazaoctane core. Deoxybrevianamide E is further hydroxylated at C-6 of the indole ring, likely catalyzed by the cytochrome P450 monooxygenase notG', to yield 6-hydroxy-deoxybrevianamide E. 6-hydroxy-deoxybrevianamide E is a specific substrate of the prenyltransferase notC' for normal prenylation at C-7 to produce 6-hydroxy-7-prenyl-deoxybrevianamide, also called notoamide S. As the proposed pivotal branching point in notoamide biosynthesis, notoamide S can be diverted to notoamide E through an oxidative pyran ring closure putatively catalyzed by either notH' cytochrome P450 monooxygenase or the notD' FAD-linked oxidoreductase. This step would be followed by an indole 2,3-epoxidation-initiated pinacol-like rearrangement catalyzed by the notB' FAD-dependent monooxygenase leading to the formation of notoamide C and notoamide D. On the other hand notoamide S is converted to notoamide T by notH' (or notD'), a bifunctional oxidase that also functions as the intramolecular Diels-Alderase responsible for generation of (-)-notoamide T. To generate antipodal (+)-notoaminide T, notH (or notD) in Aspergillus strain MF297-2 is expected to catalyze a Diels-Alder reaction leading to the opposite stereochemistry. The remaining oxidoreductase notD' (or notH') likely catalyzes the oxidative pyran ring formation to yield (-)-stephacidin A. The FAD-dependent monooxygenase notI' is highly similar to notB' and is predicted to catalyze a similar conversion from (-)-stephacidin A to (+)-notoamide B via the 2,3-epoxidation of (-)-stephacidin A followed by a pinacol-type rearrangement. Finally, it remains unclear which enzyme could be responsible for the final hydroxylation steps leading to notoamide A and sclerotiamide. The function of notO' in the notoamide biosynthesis has not been determined yet. The polypeptide is Notoamide biosynthesis cluster protein O' (Aspergillus versicolor).